Reading from the N-terminus, the 205-residue chain is 3-isopropylmalate dehydratase small subunit (205 aa).

The protein belongs to the LeuD family. LeuD type 1 subfamily. In terms of assembly, heterodimer of LeuC and LeuD.

It catalyses the reaction (2R,3S)-3-isopropylmalate = (2S)-2-isopropylmalate. It functions in the pathway amino-acid biosynthesis; L-leucine biosynthesis; L-leucine from 3-methyl-2-oxobutanoate: step 2/4. Catalyzes the isomerization between 2-isopropylmalate and 3-isopropylmalate, via the formation of 2-isopropylmaleate. This is 3-isopropylmalate dehydratase small subunit from Christiangramia forsetii (strain DSM 17595 / CGMCC 1.15422 / KT0803) (Gramella forsetii).